Consider the following 171-residue polypeptide: Lipoprotein signal peptidase (171 aa).

4 consecutive transmembrane segments (helical) span residues W15 to D35, V47 to S67, W72 to M92, and A107 to V127. Residues D128 and D146 contribute to the active site. A helical membrane pass occupies residues A141–F161.

It belongs to the peptidase A8 family.

The protein localises to the cell inner membrane. It catalyses the reaction Release of signal peptides from bacterial membrane prolipoproteins. Hydrolyzes -Xaa-Yaa-Zaa-|-(S,diacylglyceryl)Cys-, in which Xaa is hydrophobic (preferably Leu), and Yaa (Ala or Ser) and Zaa (Gly or Ala) have small, neutral side chains.. It participates in protein modification; lipoprotein biosynthesis (signal peptide cleavage). This protein specifically catalyzes the removal of signal peptides from prolipoproteins. In Vibrio cholerae serotype O1 (strain ATCC 39541 / Classical Ogawa 395 / O395), this protein is Lipoprotein signal peptidase.